Reading from the N-terminus, the 82-residue chain is Sec-independent protein translocase protein TatA (82 aa).

A helical membrane pass occupies residues 1–21 (MGSFSIWHWLIVLLVVVMIFG). A disordered region spans residues 39 to 82 (FKDGMKDGSTTDAPAASSAPAAQVTGQPANSDKSTIDVEARQKS). Low complexity predominate over residues 51–60 (APAASSAPAA). Over residues 62–71 (VTGQPANSDK) the composition is skewed to polar residues. Residues 72–82 (STIDVEARQKS) are compositionally biased toward basic and acidic residues.

Belongs to the TatA/E family. In terms of assembly, the Tat system comprises two distinct complexes: a TatABC complex, containing multiple copies of TatA, TatB and TatC subunits, and a separate TatA complex, containing only TatA subunits. Substrates initially bind to the TatABC complex, which probably triggers association of the separate TatA complex to form the active translocon.

The protein localises to the cell inner membrane. Part of the twin-arginine translocation (Tat) system that transports large folded proteins containing a characteristic twin-arginine motif in their signal peptide across membranes. TatA could form the protein-conducting channel of the Tat system. The sequence is that of Sec-independent protein translocase protein TatA from Variovorax paradoxus (strain S110).